The primary structure comprises 199 residues: Nicotinamide riboside kinase 1 (199 aa).

Residue 10–18 participates in ATP binding; the sequence is GVTNSGKTT. Positions 17 and 36 each coordinate Mg(2+). Residue D36 is the Proton acceptor of the active site. Substrate contacts are provided by residues 36–39 and 55–56; these read DDFF and YD. An ATP-binding site is contributed by R128. Residues R129 and 134-135 each bind substrate; that span reads YQ. ATP contacts are provided by residues 132-134 and 172-174; these read RVY and KSE.

Belongs to the uridine kinase family. NRK subfamily. Monomer.

It carries out the reaction beta-nicotinamide D-riboside + ATP = beta-nicotinamide D-ribonucleotide + ADP + H(+). The catalysed reaction is beta-D-ribosylnicotinate + ATP = nicotinate beta-D-ribonucleotide + ADP + H(+). It participates in cofactor biosynthesis; NAD(+) biosynthesis. Catalyzes the phosphorylation of nicotinamide riboside (NR) and nicotinic acid riboside (NaR) to form nicotinamide mononucleotide (NMN) and nicotinic acid mononucleotide (NaMN). The enzyme also phosphorylates the antitumor drugs tiazofurin and 3-deazaguanosine. The sequence is that of Nicotinamide riboside kinase 1 (NMRK1) from Homo sapiens (Human).